Here is a 951-residue protein sequence, read N- to C-terminus: WD repeat-containing and planar cell polarity effector protein fritz (951 aa).

WD repeat units follow at residues 304–343 (PMGAQICSFAFSPDQEKLFLGSVDRNICLHDLVQQSTKYA) and 345–384 (QIEIVPNQCAWHCDSAMLCVANERSVLQCFDLALATIGHQ). Polar residues-rich tracts occupy residues 709-720 (TLKSNSSLQQAP), 757-771 (IPDQSAQLGQFSTMP), and 818-828 (SILSNPANPAP). Disordered stretches follow at residues 709-776 (TLKS…SPPP), 816-883 (TASI…AARH), and 903-951 (EYLK…FGVV). The span at 930–942 (SSKGGNSSSSSSS) shows a compositional bias: low complexity.

Belongs to the WD repeat fritz family.

The protein resides in the cell membrane. It localises to the cytoplasm. It is found in the cytoskeleton. The protein localises to the cilium axoneme. Probable effector of the planar cell polarity signaling pathway which regulates the septin cytoskeleton in both ciliogenesis and collective cell movements. Functions cell autonomously to regulate wing cell hair polarity and number. This chain is WD repeat-containing and planar cell polarity effector protein fritz (frtz), found in Drosophila melanogaster (Fruit fly).